The primary structure comprises 683 residues: Boron transporter 4 (683 aa).

The Cytoplasmic portion of the chain corresponds to 1-38; the sequence is MEEERVDSSKRLFRGIVADLRGRALCYKEDWVAGLRSG. A helical membrane pass occupies residues 39–59; it reads FGILAPTTYIFFASALPVIAF. Topologically, residues 60 to 80 are extracellular; it reads GEQLSRDTEGALSTVETLAST. Residues 81–101 traverse the membrane as a helical segment; sequence ALCGVIHSILGGQPLLILGVA. The Cytoplasmic segment spans residues 102 to 126; sequence EPTVLMYVYLYNFAIGRPELGKQLY. A helical transmembrane segment spans residues 127 to 147; sequence LAWAAWVCVWTALLLFVMAIL. The Extracellular segment spans residues 148 to 160; it reads NTADIINRFTRVA. Residues 161–181 traverse the membrane as a helical segment; that stretch reads GELFGMLISVLFIQQAIKGMV. The Cytoplasmic segment spans residues 182 to 200; sequence SEFGMPKDEDSKLEKYKFE. The helical transmembrane segment at 201-221 threads the bilayer; sequence WLYTNGLLGLIFTFGLLYTAL. At 222-238 the chain is on the extracellular side; sequence KSRKARSWRYGTGWYRS. Residues 239–259 traverse the membrane as a helical segment; that stretch reads FIADYGVPLMVVVWTALSFST. Residues 260–294 are Cytoplasmic-facing; sequence PSKLPSGVPRRLFSPLPWDSPSLSHWTVIKDMGKV. A helical membrane pass occupies residues 295–315; it reads SPGYIFAAFIPALMIAGLYFF. At 316–335 the chain is on the extracellular side; that stretch reads DHSVASQLAQQKEFNLKKPS. The chain crosses the membrane as a helical span at residues 336–356; the sequence is AYHYDILLLGFMTLICGLLGL. Topologically, residues 357–477 are cytoplasmic; sequence PPSNGVLPQS…EQRVSNLLQS (121 aa). A helical membrane pass occupies residues 478-498; that stretch reads LLVAGAVLAMPAIKLIPTSIL. At 499 to 565 the chain is on the extracellular side; that stretch reads WGYFAYMAID…QIFYFGLCYG (67 aa). A helical transmembrane segment spans residues 566–586; sequence VTWIPVAGIMFPVPFFLLIAI. Topologically, residues 587-683 are cytoplasmic; it reads RQYILPKLFN…GDGDMSTTRE (97 aa). Disordered stretches follow at residues 617–638 and 661–683; these read NPLE…GDAE and KGNQ…TTRE.

It belongs to the anion exchanger (TC 2.A.31.3) family. In terms of tissue distribution, expressed in the distal sides of epidermal cells in the elongation zone of roots.

It is found in the membrane. In terms of biological role, efflux-type boron transporter polarly localized in roots. Boron is essential for maintaining the integrity of plants cell walls. This chain is Boron transporter 4 (BOR4), found in Arabidopsis thaliana (Mouse-ear cress).